A 369-amino-acid chain; its full sequence is 4-hydroxy-3-methylbut-2-en-1-yl diphosphate synthase (flavodoxin) (369 aa).

[4Fe-4S] cluster is bound by residues cysteine 270, cysteine 273, cysteine 305, and glutamate 312.

This sequence belongs to the IspG family. The cofactor is [4Fe-4S] cluster.

The catalysed reaction is (2E)-4-hydroxy-3-methylbut-2-enyl diphosphate + oxidized [flavodoxin] + H2O + 2 H(+) = 2-C-methyl-D-erythritol 2,4-cyclic diphosphate + reduced [flavodoxin]. It participates in isoprenoid biosynthesis; isopentenyl diphosphate biosynthesis via DXP pathway; isopentenyl diphosphate from 1-deoxy-D-xylulose 5-phosphate: step 5/6. Functionally, converts 2C-methyl-D-erythritol 2,4-cyclodiphosphate (ME-2,4cPP) into 1-hydroxy-2-methyl-2-(E)-butenyl 4-diphosphate. This Pseudomonas entomophila (strain L48) protein is 4-hydroxy-3-methylbut-2-en-1-yl diphosphate synthase (flavodoxin).